Reading from the N-terminus, the 415-residue chain is MIDKKLLLQDFEMVALSLKKRNHAMDDGLERLREVITHYKKQLIELEGLQAFQNKVSKEFGIKMAQKADTSDLKKELESNKIKLNELSKSVSELEQQIDLKLSIIPNLVDEKTPLGANEEDNIEIKKILTPRVFNFKPKEHFELAQQNGWIDFESGVKLAKSRFSVIRGFGAKIYRALIYLMLDFNEKNGFEIIYTPALVNEKMLFGTGQLPKFKEDVFKIENENLYLIPTAEVTLTNLYNDTIISVENLPIKMTAHTPCFRSEAGSAGKDTRGMIRQHQFDKVELVAITHPKESDAMQECMLESASEILRALELPHRFVQLCSGDLGFSASNTIDIEVWLPGQNCYREISSVSNTRDFQARRAKIRFKENQKNQLAHTLNGSSLAVGRTMVALMENHQQADGSIHIPKALEKYL.

231 to 233 (TAE) contributes to the L-serine binding site. Residue 262–264 (RSE) participates in ATP binding. Glutamate 285 is an L-serine binding site. Residue 349–352 (EISS) participates in ATP binding. Serine 383 serves as a coordination point for L-serine.

The protein belongs to the class-II aminoacyl-tRNA synthetase family. Type-1 seryl-tRNA synthetase subfamily. In terms of assembly, homodimer. The tRNA molecule binds across the dimer.

It is found in the cytoplasm. The catalysed reaction is tRNA(Ser) + L-serine + ATP = L-seryl-tRNA(Ser) + AMP + diphosphate + H(+). It carries out the reaction tRNA(Sec) + L-serine + ATP = L-seryl-tRNA(Sec) + AMP + diphosphate + H(+). It participates in aminoacyl-tRNA biosynthesis; selenocysteinyl-tRNA(Sec) biosynthesis; L-seryl-tRNA(Sec) from L-serine and tRNA(Sec): step 1/1. Catalyzes the attachment of serine to tRNA(Ser). Is also able to aminoacylate tRNA(Sec) with serine, to form the misacylated tRNA L-seryl-tRNA(Sec), which will be further converted into selenocysteinyl-tRNA(Sec). In Helicobacter pylori (strain P12), this protein is Serine--tRNA ligase.